Here is a 143-residue protein sequence, read N- to C-terminus: Small ribosomal subunit protein uS9 (143 aa).

S2 is modified (N-acetylserine). The tract at residues 123–143 is disordered; the sequence is MPEPKKFGGKGARSRYQKSYR. Residues 134–143 are compositionally biased toward basic residues; sequence ARSRYQKSYR.

Belongs to the universal ribosomal protein uS9 family.

This chain is Small ribosomal subunit protein uS9 (RPS16), found in Maudiozyma exigua (Yeast).